A 131-amino-acid polypeptide reads, in one-letter code: uncharacterized protein (131 aa).

The interval 99-131 (NAIQEEEIDMEQQEEKEEKPREKGKKKSVEEEF) is disordered. A compositionally biased stretch (acidic residues) spans 102–113 (QEEEIDMEQQEE). Over residues 114 to 131 (KEEKPREKGKKKSVEEEF) the composition is skewed to basic and acidic residues.

This is an uncharacterized protein from Sulfolobus islandicus rod-shaped virus 1 (SIRV-1).